The following is a 384-amino-acid chain: Galactokinase (384 aa).

Residue 35–38 (EHTD) coordinates substrate. ATP-binding positions include Ser69 and 125 to 131 (GAGLSSS). Positions 131 and 163 each coordinate Mg(2+). Asp175 serves as the catalytic Proton acceptor. Residue Tyr224 participates in substrate binding.

The protein belongs to the GHMP kinase family. GalK subfamily.

The protein localises to the cytoplasm. It catalyses the reaction alpha-D-galactose + ATP = alpha-D-galactose 1-phosphate + ADP + H(+). It participates in carbohydrate metabolism; galactose metabolism. Functionally, catalyzes the transfer of the gamma-phosphate of ATP to D-galactose to form alpha-D-galactose-1-phosphate (Gal-1-P). The protein is Galactokinase of Aliivibrio fischeri (strain MJ11) (Vibrio fischeri).